Reading from the N-terminus, the 299-residue chain is Transcription elongation factor A protein 2 (299 aa).

Positions 5-82 (EEIARIARRL…KSWKKLLDVS (78 aa)) constitute a TFIIS N-terminal domain. A Glycyl lysine isopeptide (Lys-Gly) (interchain with G-Cter in ubiquitin) cross-link involves residue lysine 57. Phosphoserine is present on residues serine 59 and serine 100. The tract at residues 82-127 (SDGKSRNQGRGTPLPTSSSKDASRTTDLSCKKPDPPRTPSTPRITT) is disordered. Positions 87 to 101 (RNQGRGTPLPTSSSK) are enriched in polar residues. Over residues 102-116 (DASRTTDLSCKKPDP) the composition is skewed to basic and acidic residues. One can recognise a TFIIS central domain in the interval 138-254 (VRNKCREMLT…EHQMARTGGT (117 aa)). The segment at 257 to 297 (DLFTCNKCRKKNCTYTQVQTRSSDEPMTTYVVCNECGNRWK) adopts a TFIIS-type zinc-finger fold. Positions 261, 264, 289, and 292 each coordinate Zn(2+).

The protein belongs to the TFS-II family. In terms of assembly, interacts with the basal transcription factor GTF2B. Interacts with REXO1. Testis and ovary specific. Specific to testicular germ cells.

Its subcellular location is the nucleus. Functionally, necessary for efficient RNA polymerase II transcription elongation past template-encoded arresting sites. The arresting sites in DNA have the property of trapping a certain fraction of elongating RNA polymerases that pass through, resulting in locked ternary complexes. Cleavage of the nascent transcript by S-II allows the resumption of elongation from the new 3'-terminus. The polypeptide is Transcription elongation factor A protein 2 (Tcea2) (Mus musculus (Mouse)).